The sequence spans 261 residues: Potassium/proton antiporter CemA (261 aa).

3 consecutive transmembrane segments (helical) span residues 138–158 (IISH…YLIL), 184–204 (FLIL…GWEL), and 221–241 (IISG…KYWI).

The protein belongs to the CemA family.

The protein resides in the plastid. The protein localises to the chloroplast inner membrane. The enzyme catalyses K(+)(in) + H(+)(out) = K(+)(out) + H(+)(in). Contributes to K(+)/H(+) antiport activity by supporting proton efflux to control proton extrusion and homeostasis in chloroplasts in a light-dependent manner to modulate photosynthesis. Prevents excessive induction of non-photochemical quenching (NPQ) under continuous-light conditions. Indirectly promotes efficient inorganic carbon uptake into chloroplasts. In Pinus koraiensis (Korean pine), this protein is Potassium/proton antiporter CemA.